The following is a 341-amino-acid chain: Fructose-1,6-bisphosphatase, cytosolic (341 aa).

Positions 100, 121, 123, and 124 each coordinate Mg(2+). Substrate-binding positions include 124–127, Asn215, Tyr247, Tyr267, and Lys277; that span reads DGSS. Residue Glu283 coordinates Mg(2+).

This sequence belongs to the FBPase class 1 family. Requires Mg(2+) as cofactor.

The protein localises to the cytoplasm. The enzyme catalyses beta-D-fructose 1,6-bisphosphate + H2O = beta-D-fructose 6-phosphate + phosphate. This is Fructose-1,6-bisphosphatase, cytosolic (FBPban1) from Musa acuminata (Banana).